Reading from the N-terminus, the 274-residue chain is MAVKSYKPYTPSRRFMTTLDNSDITSKPTVKKLLIKLPQKAGRNNLGRITSRHREAGAKKLYRIIDFKRNKFGVPGKVATVEYDPYRNCRICLISYVDGDKRYIIQPEGLKVGDTVMAAEAGLDIKPGNAMKLKNIPVGTVVHNVEMKPGKGGQIARSAGNSCQIMGREGKYVILRLPSGEMRYILGECMATIGTVGNAEYQNITIGKAGRSRHLGIRPQTRGIAMNPVDHPHGGGEGRSKGNHPVTPWGMPTKGYKTRKKKQSDKYIISRRKK.

Residues 223 to 274 (GIAMNPVDHPHGGGEGRSKGNHPVTPWGMPTKGYKTRKKKQSDKYIISRRKK) are disordered. Over residues 230 to 240 (DHPHGGGEGRS) the composition is skewed to basic and acidic residues. Residues 256 to 274 (YKTRKKKQSDKYIISRRKK) are compositionally biased toward basic residues.

The protein belongs to the universal ribosomal protein uL2 family. In terms of assembly, part of the 50S ribosomal subunit. Forms a bridge to the 30S subunit in the 70S ribosome.

In terms of biological role, one of the primary rRNA binding proteins. Required for association of the 30S and 50S subunits to form the 70S ribosome, for tRNA binding and peptide bond formation. It has been suggested to have peptidyltransferase activity; this is somewhat controversial. Makes several contacts with the 16S rRNA in the 70S ribosome. This chain is Large ribosomal subunit protein uL2, found in Nautilia profundicola (strain ATCC BAA-1463 / DSM 18972 / AmH).